Consider the following 174-residue polypeptide: Peptidyl-prolyl cis-trans isomerase D, mitochondrial (174 aa).

Positions F10–Q173 constitute a PPIase cyclophilin-type domain.

This sequence belongs to the cyclophilin-type PPIase family. PPIase D subfamily.

The protein resides in the mitochondrion. The catalysed reaction is [protein]-peptidylproline (omega=180) = [protein]-peptidylproline (omega=0). With respect to regulation, binds cyclosporin A (CsA). CsA mediates some of its effects via an inhibitory action on PPIase. In terms of biological role, PPIases accelerate the folding of proteins. It catalyzes the cis-trans isomerization of proline imidic peptide bonds in oligopeptides. This Dictyostelium discoideum (Social amoeba) protein is Peptidyl-prolyl cis-trans isomerase D, mitochondrial (cypD).